Reading from the N-terminus, the 10061-residue chain is MATH and LRR domain-containing protein PFE0570w (10061 aa).

3 disordered regions span residues 166-210 (DMDN…EKKN), 244-471 (NNSD…NDIN), and 1004-1170 (DDQK…DTSF). A compositionally biased stretch (polar residues) spans 169 to 179 (NNPNNHVSNNG). Residues 193–205 (TSNSIHKNNNTNI) are compositionally biased toward low complexity. Basic and acidic residues predominate over residues 270–282 (KKSDNNNDKKNDD). The segment covering 285–320 (NNNNNNNNNNNNNNNNNDNHVCTSNNQPNTINKQNN) has biased composition (low complexity). The segment covering 328 to 338 (DQNGRTKITPQ) has biased composition (polar residues). Residues 338–366 (QNVNQKEKEIKNVVKEKNNFNREEKDITN) adopt a coiled-coil conformation. Residues 342 to 365 (QKEKEIKNVVKEKNNFNREEKDIT) show a composition bias toward basic and acidic residues. Residues 366–375 (NSDDYDENST) show a composition bias toward acidic residues. 2 stretches are compositionally biased toward polar residues: residues 376-389 (DESC…TSSE) and 421-437 (VPSN…SAEN). Residues 431–469 (NVKSAENCNKEKKKKKKKKKKELNNDNKDNTLNNETMND) are a coiled coil. A compositionally biased stretch (basic residues) spans 441–451 (EKKKKKKKKKK). Low complexity predominate over residues 460-471 (NTLNNETMNDIN). Over residues 1025–1037 (NEEKPNVNKEGNI) the composition is skewed to basic and acidic residues. The span at 1047 to 1057 (NKNKNNNNNNN) shows a compositional bias: low complexity. The segment covering 1058–1132 (DKNDKNDKND…KKKKNGKEQN (75 aa)) has biased composition (basic and acidic residues). The span at 1133-1165 (EDSTESDDESSVIDDNYIDDDSCDCDSESDSID) shows a compositional bias: acidic residues. An MATH domain is found at 1328–1458 (NGKIELYIPN…SGGLLIKGKV (131 aa)). A disordered region spans residues 1651-1698 (GGNLQNEQKGDEDVKKEDVKKENVNKEEIKNGNNNNNNDENENEVDDN). A compositionally biased stretch (basic and acidic residues) spans 1658-1680 (QKGDEDVKKEDVKKENVNKEEIK). Residues 1916-1948 (NYLSNLNKVKININDLNNNIVDVNNSIHNIEKE) are a coiled coil. Residues 1973–1995 (HKETSSIQNKGKEKSNNNIKSDD) show a composition bias toward basic and acidic residues. 4 disordered regions span residues 1973-1998 (HKET…DNNN), 2155-2245 (LNKS…PSYK), 2427-2566 (YSDD…NNIK), and 3120-3139 (SNET…NEMK). The segment covering 2216–2228 (NNDDKDDDDDDSY) has biased composition (acidic residues). A compositionally biased stretch (basic and acidic residues) spans 2235 to 2245 (SDGKKNDPSYK). Positions 2475-2484 (NNNNNNNNMM) are enriched in low complexity. Composition is skewed to basic and acidic residues over residues 2487–2496 (DDNKVNKNEE) and 2505–2527 (QIKE…RNED). Low complexity-rich tracts occupy residues 2552–2564 (NNNN…NNNN) and 3121–3133 (NETN…NRTN). A coiled-coil region spans residues 2555-2580 (NNNNNNNNNNIKRLDDSYNKLLKNKN). The helical transmembrane segment at 3398–3418 (KLILKKIFMYLNIICMIIKYI) threads the bilayer. Disordered stretches follow at residues 3802 to 3826 (STND…YSKK), 3847 to 3890 (LTSG…DNNN), and 3919 to 3953 (ESND…EKKS). Basic and acidic residues predominate over residues 3809-3822 (VDRSDDSESNDDKK). The segment covering 3851-3890 (NSSSKNSKKNSNNESIQMDNTNNSNSNNNNKNDNNNDNNN) has biased composition (low complexity). Polar residues predominate over residues 3926–3941 (KNQNIQSNEQSVTPNR). Residues 3942-3953 (NIEENKDHEKKS) show a composition bias toward basic and acidic residues. Residues 3977 to 4001 (EHLGNATAVLNILQKKLENEELKKL) are a coiled coil. The span at 4039 to 4065 (VSAHKEKNVKTDSSDDKKKKEDNENNN) shows a compositional bias: basic and acidic residues. 6 disordered regions span residues 4039–4074 (VSAH…IIHN), 4155–4180 (KGNN…NNMG), 4352–4414 (SNNN…NNNN), 4919–4943 (NKRK…DNDN), 4991–5030 (DGLN…KNEK), and 5179–5207 (SKIA…KSNL). The segment covering 4157-4178 (NNSKDNNNNNNNNNNNNNNKNN) has biased composition (low complexity). Residues 4399 to 4424 (NNNNNNNNNNNNNNNNVNKEIIKLNS) adopt a coiled-coil conformation. Composition is skewed to low complexity over residues 4929–4943 (NNNN…DNDN), 5004–5019 (NMNN…NNSN), and 5185–5202 (NGNN…NNNN). Residues 5006–5046 (NNVKNKNNNNNNSNNKRKKNEKNEKIDKIEQFLHESELEKD) adopt a coiled-coil conformation. 3 coiled-coil regions span residues 5486–5563 (NNNN…NIYE), 5728–5810 (DVLK…DKEE), and 5900–6022 (MNND…INNY). 3 stretches are compositionally biased toward basic and acidic residues: residues 5716–5732 (KDAK…VLKD), 5738–5811 (SNKE…KEEP), and 5909–5953 (NKNK…KKDN). 7 disordered regions span residues 5716 to 5816 (KDAK…QINE), 5892 to 6009 (EIIN…KKLK), 6123 to 6142 (KSET…VDGK), 6299 to 6338 (NDSI…DKGE), 6722 to 6760 (NMNN…NNNI), 7585 to 7730 (EDML…VEEK), and 7744 to 7787 (DLLS…KKSS). A compositionally biased stretch (low complexity) spans 5954 to 5968 (NNSNNNNNNNNLSNN). Residues 5969–5978 (GEEDPNDSDS) are compositionally biased toward acidic residues. Basic and acidic residues predominate over residues 5991–6003 (NKNINDDSDDNNK). Residues 6129–6138 (SNKNVESNDN) are compositionally biased toward polar residues. Composition is skewed to low complexity over residues 6314–6333 (SNSN…NNNN) and 6722–6759 (NMNN…NNNN). A coiled-coil region spans residues 6719–6743 (NMNNMNNNNNNNNNNNNNNNNNNNN). Basic and acidic residues predominate over residues 7585 to 7599 (EDMLHSKKTDVIQHG). A compositionally biased stretch (acidic residues) spans 7600–7685 (DEEEDDEEDD…EHINEEEQED (86 aa)). 4 coiled-coil regions span residues 7601 to 7637 (EEED…DIED), 7710 to 7813 (NTKI…NKNE), 7934 to 7961 (KTDE…IDNE), and 8217 to 8241 (NINN…GKRE). The segment covering 7749–7765 (SKKKNHKDKRNASKNKN) has biased composition (basic residues). The segment covering 7766–7786 (KNKDILKKNENNINDEKEKKS) has biased composition (basic and acidic residues). 3 disordered regions span residues 8189–8252 (ETGG…GGEE), 8293–8380 (GKVS…IIMS), and 8474–8497 (KKKN…MDEE). Residues 8218 to 8242 (INNKEKETNKNEEQQQGEAEGKREG) are compositionally biased toward basic and acidic residues. Residues 8243–8252 (EGEEGEGGEE) are compositionally biased toward acidic residues. Residues 8305–8314 (LLNDKEHEKD) show a composition bias toward basic and acidic residues. Acidic residues predominate over residues 8315–8363 (NEDNDEDNDEDDDDEDDDEDDEDDDDDDDDDDDDDDDDDYDEDYDEDYD). Residues 8364-8374 (EKLVENKKNER) are compositionally biased toward basic and acidic residues. The span at 8478–8492 (YSNNNIYNNNSSNKV) shows a compositional bias: low complexity. 3 coiled-coil regions span residues 8644–8697 (SETL…ELNN), 8882–8907 (QYLE…VDNY), and 9219–9247 (IDMK…SNNN). Disordered regions lie at residues 9759 to 9779 (TIPR…NNNS), 9891 to 9926 (SNTS…SSSN), and 9985 to 10061 (KNNS…NNIY). 3 stretches are compositionally biased toward low complexity: residues 9764-9779 (NTTT…NNNS), 9899-9926 (NSSN…SSSN), and 9986-10022 (NNSI…NNNT). The span at 10031–10041 (IFQQNQNHSDT) shows a compositional bias: polar residues. Residues 10042–10061 (NNNNNNNNKNNSNNNNNNIY) are compositionally biased toward low complexity.

The protein resides in the membrane. The polypeptide is MATH and LRR domain-containing protein PFE0570w (Plasmodium falciparum (isolate 3D7)).